We begin with the raw amino-acid sequence, 371 residues long: tRNA-specific 2-thiouridylase MnmA (371 aa).

ATP-binding positions include 14-21 (GMSGGVDS) and Met40. The tract at residues 100–102 (NPD) is interaction with target base in tRNA. Cys105 functions as the Nucleophile in the catalytic mechanism. An intrachain disulfide couples Cys105 to Cys201. Residue Gly129 coordinates ATP. The tract at residues 151–153 (KDQ) is interaction with tRNA. Cys201 (cysteine persulfide intermediate) is an active-site residue. The segment at 309–310 (RY) is interaction with tRNA.

Belongs to the MnmA/TRMU family.

It localises to the cytoplasm. It carries out the reaction S-sulfanyl-L-cysteinyl-[protein] + uridine(34) in tRNA + AH2 + ATP = 2-thiouridine(34) in tRNA + L-cysteinyl-[protein] + A + AMP + diphosphate + H(+). Catalyzes the 2-thiolation of uridine at the wobble position (U34) of tRNA, leading to the formation of s(2)U34. The sequence is that of tRNA-specific 2-thiouridylase MnmA from Halalkalibacterium halodurans (strain ATCC BAA-125 / DSM 18197 / FERM 7344 / JCM 9153 / C-125) (Bacillus halodurans).